A 293-amino-acid polypeptide reads, in one-letter code: 4-hydroxy-tetrahydrodipicolinate synthase (293 aa).

Pyruvate is bound at residue T45. Y133 functions as the Proton donor/acceptor in the catalytic mechanism. K161 (schiff-base intermediate with substrate) is an active-site residue. I204 serves as a coordination point for pyruvate.

Belongs to the DapA family. Homotetramer; dimer of dimers.

The protein localises to the cytoplasm. It carries out the reaction L-aspartate 4-semialdehyde + pyruvate = (2S,4S)-4-hydroxy-2,3,4,5-tetrahydrodipicolinate + H2O + H(+). It functions in the pathway amino-acid biosynthesis; L-lysine biosynthesis via DAP pathway; (S)-tetrahydrodipicolinate from L-aspartate: step 3/4. Its function is as follows. Catalyzes the condensation of (S)-aspartate-beta-semialdehyde [(S)-ASA] and pyruvate to 4-hydroxy-tetrahydrodipicolinate (HTPA). The sequence is that of 4-hydroxy-tetrahydrodipicolinate synthase from Yersinia pseudotuberculosis serotype I (strain IP32953).